The chain runs to 639 residues: Elongation factor 4 (639 aa).

The tr-type G domain occupies 39 to 221; that stretch reads TMIRNFCIIA…EIVRRVPAPV (183 aa). Residues 51 to 56 and 168 to 171 contribute to the GTP site; these read DHGKST and NKID.

The protein belongs to the TRAFAC class translation factor GTPase superfamily. Classic translation factor GTPase family. LepA subfamily.

The protein resides in the cell membrane. It catalyses the reaction GTP + H2O = GDP + phosphate + H(+). Required for accurate and efficient protein synthesis under certain stress conditions. May act as a fidelity factor of the translation reaction, by catalyzing a one-codon backward translocation of tRNAs on improperly translocated ribosomes. Back-translocation proceeds from a post-translocation (POST) complex to a pre-translocation (PRE) complex, thus giving elongation factor G a second chance to translocate the tRNAs correctly. Binds to ribosomes in a GTP-dependent manner. In Frankia casuarinae (strain DSM 45818 / CECT 9043 / HFP020203 / CcI3), this protein is Elongation factor 4.